A 394-amino-acid polypeptide reads, in one-letter code: Elongation factor Tu 1 (394 aa).

A tr-type G domain is found at lysine 10–glutamine 204. The tract at residues glycine 19–threonine 26 is G1. Position 19 to 26 (glycine 19 to threonine 26) interacts with GTP. Threonine 26 serves as a coordination point for Mg(2+). The interval glycine 60–serine 64 is G2. The segment at aspartate 81–glycine 84 is G3. GTP-binding positions include aspartate 81–histidine 85 and asparagine 136–aspartate 139. The interval asparagine 136–aspartate 139 is G4. Residues serine 174–leucine 176 are G5.

It belongs to the TRAFAC class translation factor GTPase superfamily. Classic translation factor GTPase family. EF-Tu/EF-1A subfamily. Monomer.

The protein resides in the cytoplasm. It catalyses the reaction GTP + H2O = GDP + phosphate + H(+). Functionally, GTP hydrolase that promotes the GTP-dependent binding of aminoacyl-tRNA to the A-site of ribosomes during protein biosynthesis. The protein is Elongation factor Tu 1 of Pseudoalteromonas translucida (strain TAC 125).